A 771-amino-acid polypeptide reads, in one-letter code: DNA helicase/primase complex-associated protein (771 aa).

It belongs to the herpesviridae HEPA family. Associates with the primase and the helicase to form the helicase-primase complex. Interacts with the origin-binding protein. Interacts with the polymerase catalytic subunit.

The protein resides in the host nucleus. In terms of biological role, component of the helicase/primase complex. Unwinds the DNA at the replication forks and generates single-stranded DNA for both leading and lagging strand synthesis. The primase synthesizes short RNA primers on the lagging strand that the polymerase presumably elongates using dNTPs. The primase-associated factor has no known catalytic activity in the complex and may serve to facilitate the formation of the replisome by directly interacting with the origin-binding protein and the polymerase. In Varicella-zoster virus (strain Oka vaccine) (HHV-3), this protein is DNA helicase/primase complex-associated protein.